The chain runs to 493 residues: Transcript termination protein A18 (493 aa).

Residues 100 to 256 form the Helicase ATP-binding domain; the sequence is MIESKRPLYI…NSIINIAKLS (157 aa). Position 113–120 (113–120) interacts with ATP; the sequence is LACGFGKT. Residues 206-209 carry the DESH box motif; it reads DESH.

The protein belongs to the helicase family. Poxviruses subfamily. In terms of assembly, interacts with G2. Might be part of a transcription complex composed at least of G2, A18, and H5.

The protein localises to the virion. Its function is as follows. DNA helicase which seems to act as a postreplicative transcription termination factor. Involved in ATP-dependent release of nascent RNA. Forms a stable complex with single-stranded DNA, and to a lesser extent RNA. The polypeptide is Transcript termination protein A18 (Homo sapiens (Human)).